The chain runs to 604 residues: Prostaglandin G/H synthase 2 (604 aa).

The first 17 residues, 1-17, serve as a signal peptide directing secretion; sequence MLARALLLCAAVALSHA. Residues 18–55 form the EGF-like domain; the sequence is ANPCCSNPCQNRGVCMTMGFDQYKCDCTRTGFYGENCS. Intrachain disulfides connect Cys21–Cys32, Cys22–Cys145, Cys26–Cys42, and Cys44–Cys54. Asn53 carries an N-linked (GlcNAc...) asparagine glycan. Arg106 contacts substrate. Asn130 carries an N-linked (GlcNAc...) asparagine glycan. The Proton acceptor role is filled by His193. Tyr341 contributes to the substrate binding site. The active-site For cyclooxygenase activity is Tyr371. His374 provides a ligand contact to heme b. Asn396 carries N-linked (GlcNAc...) asparagine glycosylation. The residue at position 526 (Cys526) is an S-nitrosocysteine. Cys555 and Cys561 are oxidised to a cystine. Ser565 is modified (O-acetylserine). A glycan (N-linked (GlcNAc...) asparagine) is linked at Asn580.

The protein belongs to the prostaglandin G/H synthase family. As to quaternary structure, homodimer. Heme b serves as cofactor. In terms of processing, S-nitrosylation by NOS2 (iNOS) activates enzyme activity. S-nitrosylation may take place on different Cys residues in addition to Cys-526. Post-translationally, acetylated at Ser-565 by SPHK1. During neuroinflammation, acetylation by SPHK1 promotes neuronal secretion of specialized preresolving mediators (SPMs), especially 15-R-lipoxin A4, which results in an increase of phagocytic microglia. In terms of tissue distribution, highest expression in kidney and urinary bladder.

It localises to the microsome membrane. The protein localises to the endoplasmic reticulum membrane. Its subcellular location is the nucleus inner membrane. It is found in the nucleus outer membrane. The enzyme catalyses (5Z,8Z,11Z,14Z)-eicosatetraenoate + AH2 + 2 O2 = prostaglandin H2 + A + H2O. It catalyses the reaction (5Z,8Z,11Z,14Z)-eicosatetraenoate + 2 O2 = prostaglandin G2. It carries out the reaction prostaglandin G2 + AH2 = prostaglandin H2 + A + H2O. The catalysed reaction is (5Z,8Z,11Z,14Z,17Z)-eicosapentaenoate + 2 O2 = prostaglandin G3. The enzyme catalyses prostaglandin G3 + AH2 = prostaglandin H3 + A + H2O. It catalyses the reaction (8Z,11Z,14Z)-eicosatrienoate + 2 O2 = prostaglandin G1. It carries out the reaction prostaglandin G1 + AH2 = prostaglandin H1 + A + H2O. The catalysed reaction is 2-(5Z,8Z,11Z,14Z)-eicosatetraenoyl-sn-glycero-3-phosphoethanolamine + 2 O2 = 2-(prostaglandin G2)-sn-glycero-3-phosphoethanolamine. The enzyme catalyses 2-(prostaglandin G2)-sn-glycero-3-phosphoethanolamine + AH2 = 2-(prostaglandin H2)-sn-glycero-3-phosphoethanolamine + A + H2O. It catalyses the reaction 2-(5Z,8Z,11Z,14Z)-eicosatetraenoyl-sn-glycero-3-phosphocholine + 2 O2 = 2-(prostaglandin G2)-sn-glycero-3-phosphocholine. It carries out the reaction 2-(prostaglandin G2)-sn-glycero-3-phosphocholine + AH2 = 2-(prostaglandin H2)-sn-glycero-3-phosphocholine + A + H2O. The catalysed reaction is (15S)-hydroperoxy-(5Z,8Z,11Z,13E)-eicosatetraenoate + AH2 = (15S)-hydroxy-(5Z,8Z,11Z,13E)-eicosatetraenoate + A + H2O. The enzyme catalyses 2-(5Z,8Z,11Z,14Z)-eicosatetraenoyl-sn-glycero-3-phosphocholine + AH2 + O2 = 2-[(15S)-hydroxy-(5Z,8Z,11Z,13E)-eicosatetraenoyl]-sn-glycero-3-phosphocholine + A + H2O. It catalyses the reaction 2-(5Z,8Z,11Z,14Z)-eicosatetraenoyl-sn-glycero-3-phosphocholine + AH2 + O2 = 2-[(15R)-hydroxy-(5Z,8Z,11Z,13E)-eicosatetraenoyl]-sn-glycero-3-phosphocholine + A + H2O. It carries out the reaction 2-(5Z,8Z,11Z,14Z)-eicosatetraenoyl-sn-glycero-3-phosphocholine + AH2 + O2 = 2-[(11R)-hydroxy-(5Z,8Z,12E,14Z)-eicosatetraenoyl]-sn-glycero-3-phosphocholine + A + H2O. The catalysed reaction is (9Z,12Z)-octadecadienoate + AH2 + O2 = 9-hydroxy-(10E,12Z)-octadecadienoate + A + H2O. The enzyme catalyses (9Z,12Z)-octadecadienoate + AH2 + O2 = 13-hydroxy-(9Z,11E)-octadecadienoate + A + H2O. It catalyses the reaction (5Z,8Z,11Z,14Z)-eicosatetraenoate + AH2 + O2 = (15R)-hydroxy-(5Z,8Z,11Z,13E)-eicosatetraenoate + A + H2O. It carries out the reaction (5Z,8Z,11Z,14Z)-eicosatetraenoate + AH2 + O2 = (11R)-hydroxy-(5Z,8Z,12E,14Z)-eicosatetraenoate + A + H2O. The catalysed reaction is (5Z,8Z,11Z,14Z,17Z)-eicosapentaenoate + AH2 + O2 = (11R)-hydroxy-(5Z,8Z,12E,14Z,17Z)-eicosapentaenoate + A + H2O. The enzyme catalyses (5Z,8Z,11Z,14Z,17Z)-eicosapentaenoate + AH2 + O2 = (18S)-hydroxy-(5Z,8Z,11Z,14Z,16E)-eicosapentaenoate + A + H2O. It catalyses the reaction (5Z,8Z,11Z,14Z,17Z)-eicosapentaenoate + AH2 + O2 = (18R)-hydroxy-(5Z,8Z,11Z,14Z,16E)-eicosapentaenoate + A + H2O. It carries out the reaction (5Z,8Z,11Z,14Z,17Z)-eicosapentaenoate + AH2 + O2 = (15R)-hydroxy-(5Z,8Z,11Z,13E,17Z)-eicosapentaenoate + A + H2O. The catalysed reaction is (5Z,8Z,11Z,14Z,17Z)-eicosapentaenoate + AH2 + O2 = (15S)-hydroxy-(5Z,8Z,11Z,13E,17Z)-eicosapentaenoate + A + H2O. The enzyme catalyses (7Z,10Z,13Z,16Z,19Z)-docosapentaenoate + AH2 + O2 = 13R-hydroxy-(7Z,10Z,14E,16Z,19Z)-docosapentaenoate + A + H2O. It catalyses the reaction (4Z,7Z,10Z,13Z,16Z,19Z)-docosahexaenoate + AH2 + O2 = 13-hydroxy-(4Z,7Z,10Z,14E,16Z,19Z)-docosahexaenoate + A + H2O. It carries out the reaction (5S)-hydroxy-(6E,8Z,11Z,14Z)-eicosatetraenoate + AH2 + O2 = (5S,15R)-dihydroxy-(6E,8Z,11Z,13E)-eicosatetraenoate + A + H2O. The catalysed reaction is (4Z,7Z,10Z,13Z,16Z,19Z)-docosahexaenoate + AH2 + O2 = 17R-hydroxy-(4Z,7Z,10Z,13Z,15E,19Z)-docosahexaenoate + A + H2O. The enzyme catalyses (5S)-hydroxy-(6E,8Z,11Z,14Z)-eicosatetraenoate + AH2 + O2 = (5S,15S)-dihydroxy-(6E,8Z,11Z,13E)-eicosatetraenoate + A + H2O. It catalyses the reaction (5S)-hydroxy-(6E,8Z,11Z,14Z)-eicosatetraenoate + AH2 + O2 = (5S,11R)-dihydroxy-(6E,8Z,12E,14Z)-eicosatetraenoate + A + H2O. It carries out the reaction 2-(5Z,8Z,11Z,14Z-eicosatetraenoyl)-glycerol + 2 O2 = 2-glyceryl-prostaglandin G2. The catalysed reaction is 2-glyceryl-prostaglandin G2 + AH2 = 2-glyceryl-prostaglandin H2 + A + H2O. The enzyme catalyses (5Z,8Z,11Z,14Z)-eicosatetraenoate + O2 = (15R)-hydroperoxy-(5Z,8Z,11Z,13E)-eicosatetraenoate. It catalyses the reaction (5Z,8Z,11Z,14Z)-eicosatetraenoate + O2 = 11R-hydroperoxy-(5Z,8Z,12E,14Z)-eicosatetraenoate. It carries out the reaction (9Z,12Z)-octadecadienoate + AH2 + O2 = (9R)-hydroxy-(10E,12Z)-octadecadienoate + A + H2O. The catalysed reaction is (9Z,12Z)-octadecadienoate + AH2 + O2 = (9S)-hydroxy-(10E,12Z)-octadecadienoate + A + H2O. The enzyme catalyses (9Z,12Z)-octadecadienoate + AH2 + O2 = (13S)-hydroxy-(9Z,11E)-octadecadienoate + A + H2O. It catalyses the reaction (9Z,12Z)-octadecadienoate + AH2 + O2 = (13R)-hydroxy-(9Z,11E)-octadecadienoate + A + H2O. The protein operates within lipid metabolism; prostaglandin biosynthesis. Its function is as follows. Dual cyclooxygenase and peroxidase in the biosynthesis pathway of prostanoids, a class of C20 oxylipins mainly derived from arachidonate ((5Z,8Z,11Z,14Z)-eicosatetraenoate, AA, C20:4(n-6)), with a particular role in the inflammatory response. The cyclooxygenase activity oxygenates AA to the hydroperoxy endoperoxide prostaglandin G2 (PGG2), and the peroxidase activity reduces PGG2 to the hydroxy endoperoxide prostaglandin H2 (PGH2), the precursor of all 2-series prostaglandins and thromboxanes. This complex transformation is initiated by abstraction of hydrogen at carbon 13 (with S-stereochemistry), followed by insertion of molecular O2 to form the endoperoxide bridge between carbon 9 and 11 that defines prostaglandins. The insertion of a second molecule of O2 (bis-oxygenase activity) yields a hydroperoxy group in PGG2 that is then reduced to PGH2 by two electrons. Similarly catalyzes successive cyclooxygenation and peroxidation of dihomo-gamma-linoleate (DGLA, C20:3(n-6)) and eicosapentaenoate (EPA, C20:5(n-3)) to corresponding PGH1 and PGH3, the precursors of 1- and 3-series prostaglandins. In an alternative pathway of prostanoid biosynthesis, converts 2-arachidonoyl lysophopholipids to prostanoid lysophopholipids, which are then hydrolyzed by intracellular phospholipases to release free prostanoids. Metabolizes 2-arachidonoyl glycerol yielding the glyceryl ester of PGH2, a process that can contribute to pain response. Generates lipid mediators from n-3 and n-6 polyunsaturated fatty acids (PUFAs) via a lipoxygenase-type mechanism. Oxygenates PUFAs to hydroperoxy compounds and then reduces them to corresponding alcohols. Plays a role in the generation of resolution phase interaction products (resolvins) during both sterile and infectious inflammation. Metabolizes docosahexaenoate (DHA, C22:6(n-3)) to 17R-HDHA, a precursor of the D-series resolvins (RvDs). As a component of the biosynthetic pathway of E-series resolvins (RvEs), converts eicosapentaenoate (EPA, C20:5(n-3)) primarily to 18S-HEPE that is further metabolized by ALOX5 and LTA4H to generate 18S-RvE1 and 18S-RvE2. In vascular endothelial cells, converts docosapentaenoate (DPA, C22:5(n-3)) to 13R-HDPA, a precursor for 13-series resolvins (RvTs) shown to activate macrophage phagocytosis during bacterial infection. In activated leukocytes, contributes to oxygenation of hydroxyeicosatetraenoates (HETE) to diHETES (5,15-diHETE and 5,11-diHETE). Can also use linoleate (LA, (9Z,12Z)-octadecadienoate, C18:2(n-6)) as substrate and produce hydroxyoctadecadienoates (HODEs) in a regio- and stereospecific manner,being (9R)-HODE ((9R)-hydroxy-(10E,12Z)-octadecadienoate) and (13S)-HODE ((13S)-hydroxy-(9Z,11E)-octadecadienoate) its major products. During neuroinflammation, plays a role in neuronal secretion of specialized preresolving mediators (SPMs) 15R-lipoxin A4 that regulates phagocytic microglia. The sequence is that of Prostaglandin G/H synthase 2 (PTGS2) from Oryctolagus cuniculus (Rabbit).